A 551-amino-acid chain; its full sequence is L-lactate permease (551 aa).

The next 13 membrane-spanning stretches (helical) occupy residues 13–33, 37–57, 69–89, 131–151, 159–179, 194–214, 220–240, 244–264, 366–386, 405–425, 438–458, 494–514, and 530–550; these read NIWL…FALI, LKGY…ALLF, VVYG…AAVF, GAAG…GLGF, LCLI…PILV, MVGR…MAIM, IKET…AQYL, FIGP…CLTL, FDWF…SIVW, LALP…SNYS, TGHA…FLTG, VTGK…VGLV, and IFTC…TWMI.

The protein belongs to the lactate permease family.

Its subcellular location is the cell inner membrane. The catalysed reaction is (S)-lactate(in) + H(+)(in) = (S)-lactate(out) + H(+)(out). It carries out the reaction (R)-lactate(in) + H(+)(in) = (R)-lactate(out) + H(+)(out). The enzyme catalyses glycolate(in) + H(+)(in) = glycolate(out) + H(+)(out). With respect to regulation, inhibited by the proton ionophore carbonyl cyanide m-chlorophenylhydrazone (CCCP). Uptake of L-lactate across the membrane. Can also transport D-lactate and glycolate. Seems to be driven by a proton motive force. The polypeptide is L-lactate permease (Escherichia coli (strain K12)).